The following is a 787-amino-acid chain: Phenylalanine--tRNA ligase beta subunit (787 aa).

Positions 39–149 constitute a tRNA-binding domain; it reads APAFAGVVIA…EDAPVGTNIR (111 aa). The B5 domain occupies 400-475; that stretch reads PEVKQVGLRL…RVYGYENIPD (76 aa). 4 residues coordinate Mg(2+): aspartate 453, aspartate 459, glutamate 462, and glutamate 463. Positions 694–786 constitute an FDX-ACB domain; that stretch reads SKFQPVRRDL…AATAAGARLR (93 aa).

Belongs to the phenylalanyl-tRNA synthetase beta subunit family. Type 1 subfamily. As to quaternary structure, tetramer of two alpha and two beta subunits. It depends on Mg(2+) as a cofactor.

It is found in the cytoplasm. It catalyses the reaction tRNA(Phe) + L-phenylalanine + ATP = L-phenylalanyl-tRNA(Phe) + AMP + diphosphate + H(+). The chain is Phenylalanine--tRNA ligase beta subunit (pheT) from Neisseria meningitidis serogroup A / serotype 4A (strain DSM 15465 / Z2491).